The chain runs to 551 residues: Crossover junction endonuclease EME1B (551 aa).

Disordered regions lie at residues 1–55 (MNDH…PIFV) and 187–239 (TTLP…RLEK). Positions 37 to 51 (SDPTPQKQPPESSFT) are enriched in polar residues. Residues 202-239 (SKEDKTSAMEEKKLRKEQERLEKAASKAEEAERKRLEK) are compositionally biased toward basic and acidic residues. The stretch at 203–253 (KEDKTSAMEEKKLRKEQERLEKAASKAEEAERKRLEKEKKKWEKGKLALKS) forms a coiled coil. Residues 287-484 (NPIERSIVWT…PSMKSLLKVY (198 aa)) form the ERCC4 domain.

Belongs to the EME1/MMS4 family. Forms a heterodimer with MUS81. Requires Mg(2+) as cofactor. The cofactor is Ca(2+).

It localises to the nucleus. In terms of biological role, interacts with MUS81 to form a DNA structure-specific endonuclease with substrate preference for branched DNA structures with a 5'-end at the branch nick. Typical substrates include 3'-flap structures, D-loops, replication forks, nicked Holliday junctions and also intact Holliday junctions with a reduced efficiency. May be required in mitosis for the processing of stalled or collapsed replication fork intermediates. Plays a role in DNA repair and in genotoxic stress-induced homologous recombination (HR) in somatic cells. Mediates a subset of meiotic recombination events that are insensitive to crossover interference. The chain is Crossover junction endonuclease EME1B (EME1B) from Arabidopsis thaliana (Mouse-ear cress).